The chain runs to 622 residues: DNA topoisomerase 3 (622 aa).

The region spanning 2–148 is the Toprim domain; the sequence is RVLCVAEKNS…SIQVIRADFN (147 aa). Positions 166–596 constitute a Topo IA-type catalytic domain; it reads SKNAADAVDA…MILTQFRDVF (431 aa). The O-(5'-phospho-DNA)-tyrosine intermediate role is filled by Tyr-330.

This sequence belongs to the type IA topoisomerase family. Interacts with hus2.

It catalyses the reaction ATP-independent breakage of single-stranded DNA, followed by passage and rejoining.. Releases the supercoiling and torsional tension of DNA introduced during the DNA replication and transcription by transiently cleaving and rejoining one strand of the DNA duplex. Introduces a single-strand break via transesterification at a target site in duplex DNA. The scissile phosphodiester is attacked by the catalytic tyrosine of the enzyme, resulting in the formation of a DNA-(5'-phosphotyrosyl)-enzyme intermediate and the expulsion of a 3'-OH DNA strand. The free DNA strand than undergoes passage around the unbroken strand thus removing DNA supercoils. Finally, in the religation step, the DNA 3'-OH attacks the covalent intermediate to expel the active-site tyrosine and restore the DNA phosphodiester backbone. The polypeptide is DNA topoisomerase 3 (top3) (Schizosaccharomyces pombe (strain 972 / ATCC 24843) (Fission yeast)).